The following is a 450-amino-acid chain: Putative nucleolar protein 5-3 (450 aa).

Residues 252–370 enclose the Nop domain; the sequence is IAPNLTALVG…LEARLRNLEG (119 aa). The tract at residues 375-423 is disordered; it reads ACEEEEEVNDKDTKKEADDEEEPKTEECSKKRKKEAELETVEDPAKKSK. A compositionally biased stretch (basic and acidic residues) spans 399-423; that stretch reads TEECSKKRKKEAELETVEDPAKKSK.

This sequence belongs to the NOP5/NOP56 family.

It is found in the nucleus. It localises to the nucleolus. Functionally, required for 60S ribosomal subunit biogenesis. The chain is Putative nucleolar protein 5-3 (NOP5-3) from Arabidopsis thaliana (Mouse-ear cress).